The chain runs to 297 residues: Homoserine kinase (297 aa).

82–92 (PLTRGLGSSAS) contributes to the ATP binding site.

Belongs to the GHMP kinase family. Homoserine kinase subfamily.

The protein resides in the cytoplasm. The catalysed reaction is L-homoserine + ATP = O-phospho-L-homoserine + ADP + H(+). The protein operates within amino-acid biosynthesis; L-threonine biosynthesis; L-threonine from L-aspartate: step 4/5. In terms of biological role, catalyzes the ATP-dependent phosphorylation of L-homoserine to L-homoserine phosphate. The protein is Homoserine kinase of Bacillus cereus (strain G9842).